Consider the following 60-residue polypeptide: Stress response protein YkoL (60 aa).

This chain is Stress response protein YkoL (ykoL), found in Bacillus subtilis (strain 168).